The following is a 446-amino-acid chain: Endoplasmic reticulum membrane adapter protein XK (446 aa).

Over 1-2 the chain is Cytoplasmic; the sequence is MK. Residues 3-23 form a helical membrane-spanning segment; the sequence is FPASVIASVFLFVAETAAALY. The Extracellular segment spans residues 24–37; the sequence is LSSTYRSAGDRMWQ. A helical membrane pass occupies residues 38 to 58; it reads VLTLLFSLMPCALVQFTLLFV. The Cytoplasmic portion of the chain corresponds to 59–68; sequence HRDLSRDRPL. The chain crosses the membrane as a helical span at residues 69–89; sequence ALLMHLLQLGPLYRCCEVFCI. The Extracellular portion of the chain corresponds to 90–140; sequence YCQSDQNEEPYVSITKKRQMPKDGLSEEVEKEVGQAEGKLITHRSAFSRAS. Position 115 is a phosphoserine (serine 115). Residues 141–161 traverse the membrane as a helical segment; it reads VIQAFLGSAPQLTLQLYITVL. Residues 162–171 lie on the Cytoplasmic side of the membrane; the sequence is EQNITTGRCF. Residues 172 to 192 traverse the membrane as a helical segment; the sequence is IMTLSLLSIVYGALRCNILAI. Residues 193–208 are Extracellular-facing; it reads KIKYDEYEVKVKPLAY. A helical transmembrane segment spans residues 209-229; that stretch reads VCIFLWRSFEIATRVIVLVLF. Topologically, residues 230–235 are cytoplasmic; it reads TSVLKI. The helical transmembrane segment at 236-256 threads the bilayer; the sequence is WVVAVILVNFFSFFLYPWIVF. Topologically, residues 257-277 are extracellular; sequence WCSGSPFPENIEKALSRVGTT. Residues 278-298 traverse the membrane as a helical segment; the sequence is IVLCFLTLLYAGINMFCWSAV. The Cytoplasmic segment spans residues 299 to 317; the sequence is QLKIDNPELISKSQNWYRL. The chain crosses the membrane as a helical span at residues 318–338; that stretch reads LIYYMTRFIENSVLLLLWYFF. The Extracellular segment spans residues 339–349; sequence KTDIYMYVCAP. Residues 350–370 form a helical membrane-spanning segment; that stretch reads LLILQLLIGYCTGILFMLVFY. Topologically, residues 371 to 446 are cytoplasmic; sequence QFFHPCKKLF…IWTAVDLCSA (76 aa).

The protein belongs to the XK family. As to quaternary structure, heterodimer with Kell; disulfide-linked. Interacts with VPS13A.

It localises to the endoplasmic reticulum membrane. Its function is as follows. Recruits the lipid transfer protein VPS13A from lipid droplets to the endoplasmic reticulum (ER) membrane. The protein is Endoplasmic reticulum membrane adapter protein XK of Mus musculus (Mouse).